The following is a 208-amino-acid chain: Adenylyl-sulfate kinase (208 aa).

35–42 serves as a coordination point for ATP; it reads GLSGSGKS. The active-site Phosphoserine intermediate is the Ser-109.

This sequence belongs to the APS kinase family.

The enzyme catalyses adenosine 5'-phosphosulfate + ATP = 3'-phosphoadenylyl sulfate + ADP + H(+). It participates in sulfur metabolism; hydrogen sulfide biosynthesis; sulfite from sulfate: step 2/3. Functionally, catalyzes the synthesis of activated sulfate. The sequence is that of Adenylyl-sulfate kinase from Geotalea uraniireducens (strain Rf4) (Geobacter uraniireducens).